The primary structure comprises 603 residues: DNA ligase (603 aa).

An ATP-binding site is contributed by E262. The N6-AMP-lysine intermediate role is filled by K264. The ATP site is built by R269, R285, E315, F355, R432, and K438.

It belongs to the ATP-dependent DNA ligase family. The cofactor is Mg(2+).

It catalyses the reaction ATP + (deoxyribonucleotide)n-3'-hydroxyl + 5'-phospho-(deoxyribonucleotide)m = (deoxyribonucleotide)n+m + AMP + diphosphate.. DNA ligase that seals nicks in double-stranded DNA during DNA replication, DNA recombination and DNA repair. The sequence is that of DNA ligase from Caldivirga maquilingensis (strain ATCC 700844 / DSM 13496 / JCM 10307 / IC-167).